A 458-amino-acid polypeptide reads, in one-letter code: N-acetylgalactosamine kinase (458 aa).

Alpha-D-galactose-binding residues include arginine 43, glutamate 49, histidine 50, and aspartate 52. The ATP site is built by glycine 143, serine 145, and serine 146. Residue aspartate 190 coordinates alpha-D-galactose. Aspartate 190 serves as the catalytic Proton acceptor. The ATP site is built by asparagine 233 and lysine 234.

It belongs to the GHMP kinase family. GalK subfamily. Monomer.

It carries out the reaction N-acetyl-alpha-D-galactosamine + ATP = N-acetyl-alpha-D-galactosamine 1-phosphate + ADP + H(+). In terms of biological role, acts on GalNAc. Also acts as a galactokinase when galactose is present at high concentrations. May be involved in a salvage pathway for the reutilization of free GalNAc derived from the degradation of complex carbohydrates. The sequence is that of N-acetylgalactosamine kinase (GALK2) from Homo sapiens (Human).